A 295-amino-acid polypeptide reads, in one-letter code: 4-hydroxy-tetrahydrodipicolinate synthase (295 aa).

Threonine 47 lines the pyruvate pocket. The active-site Proton donor/acceptor is tyrosine 135. Lysine 163 serves as the catalytic Schiff-base intermediate with substrate. Pyruvate is bound at residue isoleucine 206.

Belongs to the DapA family. In terms of assembly, homodimer.

It is found in the cytoplasm. The catalysed reaction is L-aspartate 4-semialdehyde + pyruvate = (2S,4S)-4-hydroxy-2,3,4,5-tetrahydrodipicolinate + H2O + H(+). Its pathway is amino-acid biosynthesis; L-lysine biosynthesis via DAP pathway; (S)-tetrahydrodipicolinate from L-aspartate: step 3/4. Its activity is regulated as follows. Is not feedback inhibited by lysine. Its function is as follows. Catalyzes the condensation of (S)-aspartate-beta-semialdehyde [(S)-ASA] and pyruvate to 4-hydroxy-tetrahydrodipicolinate (HTPA). This is 4-hydroxy-tetrahydrodipicolinate synthase from Staphylococcus aureus (strain COL).